Here is a 507-residue protein sequence, read N- to C-terminus: ATP synthase subunit alpha, mitochondrial (507 aa).

171 to 178 (GDRQTGKT) is a binding site for ATP.

This sequence belongs to the ATPase alpha/beta chains family. In terms of assembly, F-type ATPases have 2 components, CF(1) - the catalytic core - and CF(0) - the membrane proton channel. CF(1) has five subunits: alpha(3), beta(3), gamma(1), delta(1), epsilon(1). CF(0) has three main subunits: a, b and c.

Its subcellular location is the mitochondrion. The protein resides in the mitochondrion inner membrane. In terms of biological role, mitochondrial membrane ATP synthase (F(1)F(0) ATP synthase or Complex V) produces ATP from ADP in the presence of a proton gradient across the membrane which is generated by electron transport complexes of the respiratory chain. F-type ATPases consist of two structural domains, F(1) - containing the extramembraneous catalytic core, and F(0) - containing the membrane proton channel, linked together by a central stalk and a peripheral stalk. During catalysis, ATP synthesis in the catalytic domain of F(1) is coupled via a rotary mechanism of the central stalk subunits to proton translocation. Subunits alpha and beta form the catalytic core in F(1). Rotation of the central stalk against the surrounding alpha(3)beta(3) subunits leads to hydrolysis of ATP in three separate catalytic sites on the beta subunits. Subunit alpha does not bear the catalytic high-affinity ATP-binding sites. The sequence is that of ATP synthase subunit alpha, mitochondrial (ATPA) from Arabidopsis thaliana (Mouse-ear cress).